Reading from the N-terminus, the 271-residue chain is Ribosomal RNA small subunit methyltransferase A (271 aa).

Positions 11, 13, 38, 58, 86, and 101 each coordinate S-adenosyl-L-methionine.

Belongs to the class I-like SAM-binding methyltransferase superfamily. rRNA adenine N(6)-methyltransferase family. RsmA subfamily.

It localises to the cytoplasm. The catalysed reaction is adenosine(1518)/adenosine(1519) in 16S rRNA + 4 S-adenosyl-L-methionine = N(6)-dimethyladenosine(1518)/N(6)-dimethyladenosine(1519) in 16S rRNA + 4 S-adenosyl-L-homocysteine + 4 H(+). Its function is as follows. Specifically dimethylates two adjacent adenosines (A1518 and A1519) in the loop of a conserved hairpin near the 3'-end of 16S rRNA in the 30S particle. May play a critical role in biogenesis of 30S subunits. In Helicobacter pylori (strain Shi470), this protein is Ribosomal RNA small subunit methyltransferase A.